The following is a 73-amino-acid chain: Copper chaperone ATX1 (73 aa).

The HMA domain maps to 4–68 (IKHYQFNVVM…KIKKTGKEVR (65 aa)). 2 residues coordinate Cu(+): C15 and C18.

The protein belongs to the ATX1 family. Homodimer. Interacts with CCC2 via the copper anion.

It localises to the cytoplasm. With respect to regulation, tetrathiomolybdate directly and reversibly down-regulates copper delivery to secreted metalloenzymes. Functionally, copper homeostasis factor that specifically transports copper to the secretory pathway for incorporation into copper enzymes destined for the cell surface or extracellular milieu. Shuttles copper to the transport ATPase CCC2 on a post-Golgi vesicle for eventual targeting to the cell-surface high-affinity iron uptake protein FET3. Protects against oxygen toxicity. The polypeptide is Copper chaperone ATX1 (Saccharomyces cerevisiae (strain ATCC 204508 / S288c) (Baker's yeast)).